A 760-amino-acid chain; its full sequence is Metal transporter cnnm-2 (760 aa).

An N-terminal signal peptide occupies residues 1–21 (MIIKVFLRLLLLCAHIVCIDG). Residues 22 to 153 (KLEIRPVVSG…ETFMPVWAQC (132 aa)) are Extracellular-facing. Asparagine 88 is a glycosylation site (N-linked (GlcNAc...) asparagine). One can recognise a CNNM transmembrane domain in the interval 145–323 (TFMPVWAQCA…MENDACDIDL (179 aa)). Residues 154 to 174 (AILCLLFSISALCSGLTLGLM) form a helical membrane-spanning segment. The Cytoplasmic portion of the chain corresponds to 175–208 (ALTPQELSILMKSGSQREKKHAAAIYPIRCHGNR). A helical membrane pass occupies residues 209 to 229 (LLCTVIIMNVIVNTGITLLFD). A topological domain (extracellular) is located at residue aspartate 230. A helical membrane pass occupies residues 231–251 (LAEGLIAFVASTVGIVVFGEI). Topologically, residues 252–261 (LPQSICVKYG) are cytoplasmic. Residues 262–282 (LAVGANTIFITKFFMFLLFPI) traverse the membrane as a helical segment. The Extracellular segment spans residues 283-760 (TWPLGKILDK…SVEELKPLME (478 aa)). N-linked (GlcNAc...) asparagine glycans are attached at residues asparagine 302 and asparagine 403. CBS domains follow at residues 344–406 (MTDI…NITV) and 442–512 (MVAK…ITDE). Asparagine 528, asparagine 592, and asparagine 667 each carry an N-linked (GlcNAc...) asparagine glycan. A disordered region spans residues 708-734 (DDFGSPTRKASILDSSPNSRKRSSTSV).

Belongs to the ACDP family.

The protein resides in the cell membrane. Probable metal transporter. Probably acts redundantly with the other metal transport proteins cnnm-1, cnnm-3, cnnm-4 and cnnm-5 to regulate Mg(2+) homeostasis. In Caenorhabditis elegans, this protein is Metal transporter cnnm-2.